Consider the following 157-residue polypeptide: Crossover junction endodeoxyribonuclease RuvC (157 aa).

Active-site residues include aspartate 7, glutamate 70, and aspartate 142. Mg(2+) is bound by residues aspartate 7, glutamate 70, and aspartate 142.

This sequence belongs to the RuvC family. Homodimer which binds Holliday junction (HJ) DNA. The HJ becomes 2-fold symmetrical on binding to RuvC with unstacked arms; it has a different conformation from HJ DNA in complex with RuvA. In the full resolvosome a probable DNA-RuvA(4)-RuvB(12)-RuvC(2) complex forms which resolves the HJ. The cofactor is Mg(2+).

The protein localises to the cytoplasm. The enzyme catalyses Endonucleolytic cleavage at a junction such as a reciprocal single-stranded crossover between two homologous DNA duplexes (Holliday junction).. Its function is as follows. The RuvA-RuvB-RuvC complex processes Holliday junction (HJ) DNA during genetic recombination and DNA repair. Endonuclease that resolves HJ intermediates. Cleaves cruciform DNA by making single-stranded nicks across the HJ at symmetrical positions within the homologous arms, yielding a 5'-phosphate and a 3'-hydroxyl group; requires a central core of homology in the junction. The consensus cleavage sequence is 5'-(A/T)TT(C/G)-3'. Cleavage occurs on the 3'-side of the TT dinucleotide at the point of strand exchange. HJ branch migration catalyzed by RuvA-RuvB allows RuvC to scan DNA until it finds its consensus sequence, where it cleaves and resolves the cruciform DNA. In Synechococcus sp. (strain RCC307), this protein is Crossover junction endodeoxyribonuclease RuvC.